The chain runs to 118 residues: Basic leucine zipper transcriptional factor ATF-like 3 (118 aa).

Residues 1–69 (MSQGPPAVSV…HESLEQENSV (69 aa)) form a disordered region. 2 positions are modified to phosphoserine: Ser-2 and Ser-24. The bZIP domain maps to 28 to 91 (DDRKVRRREK…RHLSEVLKEH (64 aa)). The segment at 30 to 55 (RKVRRREKNRVAAQRSRKKQTQKADK) is basic motif. The span at 51-69 (QKADKLHEEHESLEQENSV) shows a compositional bias: basic and acidic residues. Residues 56–84 (LHEEHESLEQENSVLRREISKLKEELRHL) form a leucine-zipper region.

The protein belongs to the bZIP family. As to quaternary structure, heterodimer; heterodimerizes with JUN family proteins. Interacts with JUN. In terms of tissue distribution, highly expressed in CD8-alpha(+) classical dendritic cells (cDCs), with low to absent expression in other immune cells and non-immune tissues.

The protein resides in the nucleus. Functionally, AP-1 family transcription factor that controls the differentiation of CD8(+) thymic conventional dendritic cells in the immune system. Acts via the formation of a heterodimer with JUN family proteins that recognizes and binds DNA sequence 5'-TGA[CG]TCA-3' and regulates expression of target genes. Required for development of CD8-alpha(+) classical dendritic cells (cDCs) and related CD103(+) dendritic cells that cross-present antigens to CD8 T-cells and produce interleukin-12 (IL12) in response to pathogens. The protein is Basic leucine zipper transcriptional factor ATF-like 3 (Batf3) of Mus musculus (Mouse).